Here is a 1848-residue protein sequence, read N- to C-terminus: WD repeat-containing protein 90 (1848 aa).

The tract at residues 1-222 is binds with microtubules; sequence MAGVWQHPFV…ISPMPREMSF (222 aa). Disordered stretches follow at residues 257–278 and 316–336; these read MVTA…RSVT and SVSA…GVEQ. The span at 320-335 shows a compositional bias: basic and acidic residues; the sequence is RAEEARDLEDRSRGVE. WD repeat units lie at residues 436 to 479, 481 to 523, 530 to 570, 644 to 683, 685 to 724, 727 to 766, 769 to 808, 811 to 850, 955 to 993, and 998 to 1035; these read GHTD…AMFK, HVHS…RSGE, AHTD…LRSC, SSGP…VFLE, EHEG…YNTL, SHTD…QLYD, AEEE…LQAE, QHRG…QHVL, VHKQ…TVRP, and GHSE…DPEF. Disordered regions lie at residues 1053 to 1133 and 1151 to 1178; these read ALDP…VESD and LTGS…PDSY. Residues 1102-1113 show a composition bias toward acidic residues; sequence SESDDGQEEEGN. 2 stretches are compositionally biased toward basic and acidic residues: residues 1114–1129 and 1164–1178; these read RDEQ…RDNL and GMVK…PDSY. 11 WD repeats span residues 1252-1297, 1300-1341, 1343-1382, 1395-1433, 1435-1473, 1532-1571, 1574-1621, 1624-1663, 1670-1714, 1774-1813, and 1815-1848; these read GHPE…CMKI, HHRT…LLAT, RLFQ…TDTQ, GTAA…CFLT, EADQ…ELRE, GHRN…LLLQ, VLNQ…MEMK, PHPC…TIRV, SPIT…DKCE, PLSH…KQDF, and AYDD…IQNS.

Belongs to the WD repeat WDR90/POC16 family.

It is found in the cytoplasm. The protein resides in the cytoskeleton. Its subcellular location is the microtubule organizing center. It localises to the centrosome. The protein localises to the centriole. It is found in the centriolar satellite. Its function is as follows. Microtubule-binding protein that plays a crucial role in ensuring inner core protein localization within the centriole core, as well as in maintaining the microtubule wall integrity and the overall centriole roundness and stability. Required for efficient primary cilium formation. The sequence is that of WD repeat-containing protein 90 (wdr90) from Xenopus tropicalis (Western clawed frog).